An 807-amino-acid chain; its full sequence is DNA gyrase subunit B (807 aa).

The Toprim domain maps to 429–543 (SELFIVEGDS…KGYLYIAQPP (115 aa)). Positions 435, 508, and 510 each coordinate Mg(2+).

The protein belongs to the type II topoisomerase GyrB family. Heterotetramer, composed of two GyrA and two GyrB chains. In the heterotetramer, GyrA contains the active site tyrosine that forms a transient covalent intermediate with DNA, while GyrB binds cofactors and catalyzes ATP hydrolysis. Mg(2+) serves as cofactor. Requires Mn(2+) as cofactor. It depends on Ca(2+) as a cofactor.

It localises to the cytoplasm. The catalysed reaction is ATP-dependent breakage, passage and rejoining of double-stranded DNA.. Functionally, a type II topoisomerase that negatively supercoils closed circular double-stranded (ds) DNA in an ATP-dependent manner to modulate DNA topology and maintain chromosomes in an underwound state. Negative supercoiling favors strand separation, and DNA replication, transcription, recombination and repair, all of which involve strand separation. Also able to catalyze the interconversion of other topological isomers of dsDNA rings, including catenanes and knotted rings. Type II topoisomerases break and join 2 DNA strands simultaneously in an ATP-dependent manner. In Rickettsia conorii (strain ATCC VR-613 / Malish 7), this protein is DNA gyrase subunit B.